The sequence spans 655 residues: Polycyclic ketone monooxygenase (655 aa).

The FAD site is built by G89, D113, A114, T121, W124, C132, D133, Y139, and V183. NADPH-binding residues include T277, T280, T301, K425, and V452. Residues C424 and C596 are joined by a disulfide bond. FAD contacts are provided by T492 and N541. Position 600 (Y600) interacts with NADPH.

This sequence belongs to the FAD-binding monooxygenase family. The cofactor is FAD.

In terms of biological role, polycyclic ketone monooxygenase (PockeMO) that displays excellent enantioselectivity, acts on various ketones, and is particularly active on polycyclic molecules. Breaks C-C bonds through the insertion of a single oxygen atom adjacent to a carbonyl moiety, yielding esters or lactones from ketones. PockeMO is able to convert linear ketones (including cyclohexane and to a lesser extend 4-octanone), cyclic ketones (including cyclohexanone and cyclooctanone), bicyclic ketones and polycyclic ketones (steroids). Performs oxidation of the keto functionalities at both the A and D rings of steroids. Particularly, oxidizes the A ring of stanolone or pregnenolone. Selectively oxidizes the D ring of androstenedione or androstadienedione, steroids with keto groups in both the A and D rings, to yield the pharmaceutically relevant testo(lo)lactone. The sequence is that of Polycyclic ketone monooxygenase from Thermothelomyces thermophilus (strain ATCC 42464 / BCRC 31852 / DSM 1799) (Sporotrichum thermophile).